The sequence spans 165 residues: Chorismate pyruvate-lyase (165 aa).

Substrate is bound by residues Met35, Arg77, Leu115, and Glu156.

The protein belongs to the UbiC family. In terms of assembly, monomer.

Its subcellular location is the cytoplasm. The catalysed reaction is chorismate = 4-hydroxybenzoate + pyruvate. It functions in the pathway cofactor biosynthesis; ubiquinone biosynthesis. Removes the pyruvyl group from chorismate, with concomitant aromatization of the ring, to provide 4-hydroxybenzoate (4HB) for the ubiquinone pathway. This chain is Chorismate pyruvate-lyase, found in Salmonella agona (strain SL483).